The chain runs to 314 residues: Probable cell division protein WhiA (314 aa).

Positions 274–308 (SLKELGEMVSTGPISKSGMNHRLRKLNELADKIRN) form a DNA-binding region, H-T-H motif.

It belongs to the WhiA family.

Involved in cell division and chromosome segregation. In Staphylococcus epidermidis (strain ATCC 35984 / DSM 28319 / BCRC 17069 / CCUG 31568 / BM 3577 / RP62A), this protein is Probable cell division protein WhiA.